Consider the following 126-residue polypeptide: Nitrogenase-stabilizing/protective protein NifW (126 aa).

A disordered region spans residues 104–126 (VPMSEITVERPATTQTDEKGQQR).

Belongs to the NifW family. As to quaternary structure, homotrimer; associates with NifD.

Its function is as follows. May protect the nitrogenase Fe-Mo protein from oxidative damage. The sequence is that of Nitrogenase-stabilizing/protective protein NifW from Parafrankia sp. (strain EAN1pec).